Consider the following 463-residue polypeptide: ATP-dependent protease ATPase subunit HslU (463 aa).

ATP is bound by residues Ile-19, 61 to 66, Asp-277, Glu-341, and Arg-413; that span reads GVGKTE.

The protein belongs to the ClpX chaperone family. HslU subfamily. As to quaternary structure, a double ring-shaped homohexamer of HslV is capped on each side by a ring-shaped HslU homohexamer. The assembly of the HslU/HslV complex is dependent on binding of ATP.

It localises to the cytoplasm. Its function is as follows. ATPase subunit of a proteasome-like degradation complex; this subunit has chaperone activity. The binding of ATP and its subsequent hydrolysis by HslU are essential for unfolding of protein substrates subsequently hydrolyzed by HslV. HslU recognizes the N-terminal part of its protein substrates and unfolds these before they are guided to HslV for hydrolysis. This is ATP-dependent protease ATPase subunit HslU from Bacillus cereus (strain B4264).